Reading from the N-terminus, the 298-residue chain is Anamorsin homolog (298 aa).

Positions 1 to 143 (MTQLIITYQS…IKAEKPSWKP (143 aa)) are N-terminal SAM-like domain. Residues 143–162 (PEEGKVLVDDIDLEGSVPDI) form a linker region. [2Fe-2S] cluster-binding residues include Cys-175, Cys-182, Cys-185, and Cys-187. Residues 175–187 (CKSKERACNNCNC) are fe-S binding site A. Residues Cys-218, Cys-221, Cys-229, and Cys-232 each coordinate [4Fe-4S] cluster. Short sequence motifs (cx2C motif) lie at residues 218-221 (CGNC) and 229-232 (CSGC). Positions 218–232 (CGNCYLGDAFRCSGC) are fe-S binding site B.

It belongs to the anamorsin family. Monomer. The cofactor is [2Fe-2S] cluster. Requires [4Fe-4S] cluster as cofactor.

The protein resides in the cytoplasm. It is found in the mitochondrion intermembrane space. Component of the cytosolic iron-sulfur (Fe-S) protein assembly (CIA) machinery. Required for the maturation of extramitochondrial Fe-S proteins. Part of an electron transfer chain functioning in an early step of cytosolic Fe-S biogenesis, facilitating the de novo assembly of a [4Fe-4S] cluster on the cytosolic Fe-S scaffold complex. Electrons are transferred from NADPH via a FAD- and FMN-containing diflavin oxidoreductase. Together with the diflavin oxidoreductase, also required for the assembly of the diferric tyrosyl radical cofactor of ribonucleotide reductase (RNR), probably by providing electrons for reduction during radical cofactor maturation in the catalytic small subunit. This is Anamorsin homolog from Cryptosporidium hominis.